The chain runs to 323 residues: D-alanine--D-alanine ligase (323 aa).

The 200-residue stretch at 120–319 folds into the ATP-grasp domain; the sequence is LSVLKPYGIK…LEDLFTNAIE (200 aa). 148 to 203 is an ATP binding site; that stretch reads VKKVGLPCFVKPNKAGSSFGISKVKSEAELPIAIEVAYKEDNEIIIESFLDGTEVS. Residues glutamate 274, glutamate 286, and asparagine 288 each contribute to the Mg(2+) site.

The protein belongs to the D-alanine--D-alanine ligase family. Requires Mg(2+) as cofactor. Mn(2+) serves as cofactor.

It is found in the cytoplasm. It carries out the reaction 2 D-alanine + ATP = D-alanyl-D-alanine + ADP + phosphate + H(+). The protein operates within cell wall biogenesis; peptidoglycan biosynthesis. Cell wall formation. This chain is D-alanine--D-alanine ligase, found in Flavobacterium johnsoniae (strain ATCC 17061 / DSM 2064 / JCM 8514 / BCRC 14874 / CCUG 350202 / NBRC 14942 / NCIMB 11054 / UW101) (Cytophaga johnsonae).